We begin with the raw amino-acid sequence, 105 residues long: MSASHSLSQSPNLHPDFTYKRQEALWKQLVSAEHRKFCSCGDYTQHFRFPSPVKEDECIRVVGEEGGDGVAVSYHVTKESGDEDPEEVMASIAVGDDGDDDLELW.

This is an uncharacterized protein from Felis catus (Cat).